The primary structure comprises 259 residues: Phosphatidylglycerol--prolipoprotein diacylglyceryl transferase (259 aa).

The next 4 helical transmembrane spans lie at 9 to 29 (IIFSIGPLAISWYSLSYVIGI), 55 to 75 (FITYAVIGIIVGGRLGFVLLY), 92 to 112 (EGGMSFHGGALGGIIAAYLFC), and 117 to 137 (INFLSLTDIIAPVVPIGLFLG). A 1,2-diacyl-sn-glycero-3-phospho-(1'-sn-glycerol) is bound at residue Arg-138. 3 helical membrane passes run 172 to 192 (QLYEAFFEGLVLFSILAYTTF), 201 to 221 (GLNSGIFFTFYGLFRITIEIF), and 228 to 248 (IGFILDSLTMGQILSVPMLLL).

It belongs to the Lgt family.

Its subcellular location is the cell inner membrane. It catalyses the reaction L-cysteinyl-[prolipoprotein] + a 1,2-diacyl-sn-glycero-3-phospho-(1'-sn-glycerol) = an S-1,2-diacyl-sn-glyceryl-L-cysteinyl-[prolipoprotein] + sn-glycerol 1-phosphate + H(+). It participates in protein modification; lipoprotein biosynthesis (diacylglyceryl transfer). Functionally, catalyzes the transfer of the diacylglyceryl group from phosphatidylglycerol to the sulfhydryl group of the N-terminal cysteine of a prolipoprotein, the first step in the formation of mature lipoproteins. The chain is Phosphatidylglycerol--prolipoprotein diacylglyceryl transferase from Rickettsia conorii (strain ATCC VR-613 / Malish 7).